We begin with the raw amino-acid sequence, 541 residues long: Probable malate:quinone oxidoreductase (541 aa).

A disordered region spans residues 520–541 (AKPAAGAAQQAKPAKATADIAL).

The protein belongs to the MQO family. It depends on FAD as a cofactor.

The enzyme catalyses (S)-malate + a quinone = a quinol + oxaloacetate. It participates in carbohydrate metabolism; tricarboxylic acid cycle; oxaloacetate from (S)-malate (quinone route): step 1/1. This is Probable malate:quinone oxidoreductase from Ralstonia nicotianae (strain ATCC BAA-1114 / GMI1000) (Ralstonia solanacearum).